We begin with the raw amino-acid sequence, 643 residues long: MHGLLLAGLLALPLNVLAHPTESHSSGISRRAIDITSYRLPQISKYTKSDAVPKQDDESFTTSSTGDDNVSSGDYVTTATDWLKKTLPKATYRLVNDHYIGDSGIGHVHFRQTAHGIDIDNTDFNVNIGRDGKVFSFGNSFYDGEIPKANPMVKRDFSDPVNALQVAIQTLNLPVTAKPENVKAKPVEGKENFKFEGTSGAFSDPKAQLVYLQKDGGLVPSWKVETDIGDNWLLTYVDANKNDKVHSVVDYVSAAEYKVYPWGINDPTEGNRTSIHLPWFKTLSTDWHIDGKGWYSTTRGNNAIAQENPTGGPEYENNYRPKSPLFIFKYPYSEAMTPPSSYRDASITQLFYTTNVYHDVLYILGFNEKAGNFQVNNWNKGGVGGDFAILNSQDGSGVNNANFATPPDGQPGRMRMYTWNASTPERDGCFEAGIVIHEYTHGVSNRLTGGPANSRCLAALESGGMGEGWSDFFATAIRLKAGDTRATDYTMGEWASNRPNGIRKYRYSTNLTTNPHMYVDADGLTSVHAIGTIWASMLYELLWNLIDKHGKGDVTKVRPVLKNGVPTDGRHLAMKLVLDGMALQPCLPNFVQARDAILDADKVLTQGSNKCEIWKAFAKRGLGVGAVFNPSKRTGSNELPAGC.

Positions 1-18 (MHGLLLAGLLALPLNVLA) are cleaved as a signal peptide. Positions 19–254 (HPTESHSSGI…VHSVVDYVSA (236 aa)) are excised as a propeptide. The segment covering 47-57 (TKSDAVPKQDD) has biased composition (basic and acidic residues). The interval 47–71 (TKSDAVPKQDDESFTTSSTGDDNVS) is disordered. A compositionally biased stretch (polar residues) spans 60–71 (FTTSSTGDDNVS). 2 N-linked (GlcNAc...) asparagine glycosylation sites follow: Asn-271 and Asn-420. His-437 provides a ligand contact to Zn(2+). Residue Glu-438 is part of the active site. Zn(2+) is bound at residue His-441. Asn-510 is a glycosylation site (N-linked (GlcNAc...) asparagine).

This sequence belongs to the peptidase M36 family. Zn(2+) serves as cofactor.

It is found in the secreted. Secreted metalloproteinase probably acting as a virulence factor. The protein is Extracellular metalloproteinase 4 (MEP4) of Trichophyton equinum (Horse ringworm fungus).